The sequence spans 137 residues: MLQPKRTKYRKQHKGRNTGVAIAGSKVSFGEYGLKATTRGRITARQIEAARRTISRHVKRGGKIWIRVFPDKPVSKKPLEVRMGSGKGSVEFWVAEIKPGTMLYELEGVSEELAREAFRLAAAKLPVQTTFSLRTVM.

Belongs to the universal ribosomal protein uL16 family. In terms of assembly, part of the 50S ribosomal subunit.

Binds 23S rRNA and is also seen to make contacts with the A and possibly P site tRNAs. This Methylococcus capsulatus (strain ATCC 33009 / NCIMB 11132 / Bath) protein is Large ribosomal subunit protein uL16.